The sequence spans 439 residues: Probable aspartic-type endopeptidase AFUA_3G01220 (439 aa).

The signal sequence occupies residues 1–20; it reads MHFSIGSLFLYLIASASCTA. A disordered region spans residues 31 to 50; sequence RTPFTTSTSKPSAFTNPSTD. Residues 32-45 show a composition bias toward low complexity; the sequence is TPFTTSTSKPSAFT. Positions 95 to 436 constitute a Peptidase A1 domain; the sequence is FATSINIGNQ…DVGAAEMRFA (342 aa). N-linked (GlcNAc...) asparagine glycosylation occurs at asparagine 103. Residue aspartate 111 is part of the active site. Asparagine 149, asparagine 178, asparagine 187, asparagine 253, asparagine 256, asparagine 276, and asparagine 308 each carry an N-linked (GlcNAc...) asparagine glycan. Residue aspartate 323 is part of the active site. Asparagine 361 and asparagine 394 each carry an N-linked (GlcNAc...) asparagine glycan.

The protein belongs to the peptidase A1 family.

The protein localises to the secreted. Its function is as follows. Probable aspartic-type endopeptidase which contributes to virulence. This chain is Probable aspartic-type endopeptidase AFUA_3G01220, found in Aspergillus fumigatus (strain ATCC MYA-4609 / CBS 101355 / FGSC A1100 / Af293) (Neosartorya fumigata).